A 208-amino-acid chain; its full sequence is 3-demethoxyubiquinol 3-hydroxylase (208 aa).

Glu-57, Glu-87, His-90, Glu-139, Glu-171, and His-174 together coordinate Fe cation.

Belongs to the COQ7 family. Requires Fe cation as cofactor.

It is found in the cell membrane. It catalyses the reaction a 5-methoxy-2-methyl-3-(all-trans-polyprenyl)benzene-1,4-diol + AH2 + O2 = a 3-demethylubiquinol + A + H2O. It functions in the pathway cofactor biosynthesis; ubiquinone biosynthesis. Catalyzes the hydroxylation of 2-nonaprenyl-3-methyl-6-methoxy-1,4-benzoquinol during ubiquinone biosynthesis. This is 3-demethoxyubiquinol 3-hydroxylase from Verminephrobacter eiseniae (strain EF01-2).